Reading from the N-terminus, the 25-residue chain is Defensin D3 (25 aa).

The protein belongs to the DEFL family. Group IV subfamily. In terms of tissue distribution, distributed in the epidermal cell layer of leaves and in the subepidermal layer region of stems. Not in roots.

It localises to the secreted. It is found in the cell wall. Antimicrobial peptide. Active against Fusarium spp., Gram-positive and Gram-negative bacterial pathogens. This is Defensin D3 from Spinacia oleracea (Spinach).